A 485-amino-acid polypeptide reads, in one-letter code: MSKFIDRVVLHVRAGKGGHGCASVHREKFKPLGGPDGGNGGNGGDVVLEVDPNVHTLLDFHFHPHAKAGNGKPGEGGNRDGKMGSDLLLKVPDGTVVLDRDGEVLVDLVGAGNRFVAARGGRGGLGNAALASKARKAPGFALLGEDGEERDLVLELKSVADVGLVGFPSAGKSSLVSVLSAAKPKIADYPFTTLVPNLGVVASGDTTFTIADVPGLIPGASQGRGLGLDFLRHLERCAVLAHVVDCATLEPGRDPISDVDALEAELAAYKPALAADAGLGDLADRPRVVILNKTDVPDAAELAEMVTPEFTARGWPVFQISAVSRAGLRPLTFALADLVREYREAHPKAAPKRPVIRPIAVDESGFTVHPDPDEPGGFIVRGARPERWVRQTQFDNDEAVGYLADRLARLGVEEELVRLGAEPGAPVTIGDVTFDWEPQISAGVDMVRTGRGTDVRLEQSDRVSAAERKHASRVRRGLVEDDEQR.

Residues 2–159 (SKFIDRVVLH…RDLVLELKSV (158 aa)) form the Obg domain. The segment at 64–84 (PHAKAGNGKPGEGGNRDGKMG) is disordered. The region spanning 160–340 (ADVGLVGFPS…LTFALADLVR (181 aa)) is the OBG-type G domain. GTP contacts are provided by residues 166–173 (GFPSAGKS), 191–195 (FTTLV), 212–215 (DVPG), 292–295 (NKTD), and 321–323 (SAV). The Mg(2+) site is built by S173 and T193. Residues 358 to 438 (PIAVDESGFT…IGDVTFDWEP (81 aa)) enclose the OCT domain. Over residues 457–469 (LEQSDRVSAAERK) the composition is skewed to basic and acidic residues. Positions 457–485 (LEQSDRVSAAERKHASRVRRGLVEDDEQR) are disordered.

The protein belongs to the TRAFAC class OBG-HflX-like GTPase superfamily. OBG GTPase family. Monomer. Mg(2+) serves as cofactor.

It is found in the cytoplasm. In terms of biological role, an essential GTPase which binds GTP, GDP and possibly (p)ppGpp with moderate affinity, with high nucleotide exchange rates and a fairly low GTP hydrolysis rate. Plays a role in control of the cell cycle, stress response, ribosome biogenesis and in those bacteria that undergo differentiation, in morphogenesis control. This chain is GTPase Obg, found in Nocardia farcinica (strain IFM 10152).